The following is a 236-amino-acid chain: Osmoprotectant import permease protein OsmY (236 aa).

6 helical membrane passes run 9–29 (VLGF…GIGL), 47–67 (LMLV…SGIL), 95–115 (VLAL…VALF), 126–146 (TYAG…GIGM), 180–200 (PLAF…GIYL), and 207–227 (ILGA…LAWF). An ABC transmembrane type-1 domain is found at 43–224 (GQRHLMLVFT…LFALILDTLL (182 aa)).

Belongs to the binding-protein-dependent transport system permease family. As to quaternary structure, the complex is composed of two ATP-binding proteins (OsmV), two transmembrane proteins (OsmW and OsmY) and a solute-binding protein (OsmX).

It localises to the cell inner membrane. Part of the OsmU ABC transporter complex, which is involved in the uptake of osmoprotectants such as choline-O-sulfate and glycine betaine. Probably responsible for the translocation of the substrate across the membrane. The chain is Osmoprotectant import permease protein OsmY (osmY) from Salmonella typhimurium (strain LT2 / SGSC1412 / ATCC 700720).